The sequence spans 119 residues: UPF0102 protein GFO_3098 (119 aa).

It belongs to the UPF0102 family.

This is UPF0102 protein GFO_3098 from Christiangramia forsetii (strain DSM 17595 / CGMCC 1.15422 / KT0803) (Gramella forsetii).